A 1749-amino-acid chain; its full sequence is Intraflagellar transport protein 172 homolog (1749 aa).

An N-acetylmethionine modification is found at Met-1. Lys-4 is covalently cross-linked (Glycyl lysine isopeptide (Lys-Gly) (interchain with G-Cter in SUMO1)). WD repeat units lie at residues 14 to 53, 64 to 103, 110 to 148, 150 to 191, 195 to 233, 238 to 278, 284 to 323, 483 to 520, and 521 to 559; these read DGAA…RDKF, RKSY…GDKK, IQTS…SSTI, GTES…ESQG, NHPC…QTFD, PQER…WEEA, TNLY…SIYK, SHES…CSKT, and MILN…ERVT. A TPR 1 repeat occupies 593 to 624; sequence DEGLIEFGTAIDDGNYIRATAFLETLEMTPET. Arg-672 is modified (omega-N-methylarginine). TPR repeat units follow at residues 692–725, 809–842, 854–887, 912–945, 947–970, 971–1004, 1042–1075, 1142–1175, 1276–1309, 1345–1378, 1411–1445, 1447–1477, and 1574–1607; these read EKNY…DECI, GELY…MKAV, VKLE…IKAI, SKYY…KDAI, MYTQ…PEDV, SVLY…DLAI, EGRL…EEAY, PEVH…KEAV, VEGF…GNSG, IGKH…NKAK, GVDV…LHKY, ALYA…NPQN, and DKAF…TDAI.

The protein belongs to the IFT172 family. As to quaternary structure, interacts with IFT88. Interacts with IFT57. Interacts with RABL2/RABL2A; binds preferentially to GDP-bound RABL2.

The protein resides in the cell projection. Its subcellular location is the cilium. Functionally, required for the maintenance and formation of cilia. Plays an indirect role in hedgehog (Hh) signaling, cilia being required for all activity of the hedgehog pathway. The chain is Intraflagellar transport protein 172 homolog (IFT172) from Homo sapiens (Human).